Here is a 387-residue protein sequence, read N- to C-terminus: Phosphoglycerate kinase (387 aa).

Residues 21-23 (DLN), arginine 36, 59-62 (HLGR), arginine 113, and arginine 146 contribute to the substrate site. Residues lysine 197, glutamate 314, and 340–343 (GGDT) each bind ATP.

The protein belongs to the phosphoglycerate kinase family. As to quaternary structure, monomer.

The protein resides in the cytoplasm. The enzyme catalyses (2R)-3-phosphoglycerate + ATP = (2R)-3-phospho-glyceroyl phosphate + ADP. It participates in carbohydrate degradation; glycolysis; pyruvate from D-glyceraldehyde 3-phosphate: step 2/5. The protein is Phosphoglycerate kinase of Tolumonas auensis (strain DSM 9187 / NBRC 110442 / TA 4).